We begin with the raw amino-acid sequence, 213 residues long: Thiamine-phosphate synthase (213 aa).

Residues 40–44 (QFREK) and Asn-75 contribute to the 4-amino-2-methyl-5-(diphosphooxymethyl)pyrimidine site. Mg(2+)-binding residues include Asp-76 and Asp-95. Ser-113 contributes to the 4-amino-2-methyl-5-(diphosphooxymethyl)pyrimidine binding site. 139–141 (TPS) contributes to the 2-[(2R,5Z)-2-carboxy-4-methylthiazol-5(2H)-ylidene]ethyl phosphate binding site. Lys-142 contributes to the 4-amino-2-methyl-5-(diphosphooxymethyl)pyrimidine binding site. Residues Gly-171 and 191 to 192 (IS) each bind 2-[(2R,5Z)-2-carboxy-4-methylthiazol-5(2H)-ylidene]ethyl phosphate.

It belongs to the thiamine-phosphate synthase family. It depends on Mg(2+) as a cofactor.

The enzyme catalyses 2-[(2R,5Z)-2-carboxy-4-methylthiazol-5(2H)-ylidene]ethyl phosphate + 4-amino-2-methyl-5-(diphosphooxymethyl)pyrimidine + 2 H(+) = thiamine phosphate + CO2 + diphosphate. It carries out the reaction 2-(2-carboxy-4-methylthiazol-5-yl)ethyl phosphate + 4-amino-2-methyl-5-(diphosphooxymethyl)pyrimidine + 2 H(+) = thiamine phosphate + CO2 + diphosphate. The catalysed reaction is 4-methyl-5-(2-phosphooxyethyl)-thiazole + 4-amino-2-methyl-5-(diphosphooxymethyl)pyrimidine + H(+) = thiamine phosphate + diphosphate. It functions in the pathway cofactor biosynthesis; thiamine diphosphate biosynthesis; thiamine phosphate from 4-amino-2-methyl-5-diphosphomethylpyrimidine and 4-methyl-5-(2-phosphoethyl)-thiazole: step 1/1. In terms of biological role, condenses 4-methyl-5-(beta-hydroxyethyl)thiazole monophosphate (THZ-P) and 2-methyl-4-amino-5-hydroxymethyl pyrimidine pyrophosphate (HMP-PP) to form thiamine monophosphate (TMP). This chain is Thiamine-phosphate synthase, found in Staphylococcus aureus (strain MRSA252).